Here is a 259-residue protein sequence, read N- to C-terminus: Insulin-like growth factor-binding protein 4 (259 aa).

Positions 1–22 (MLPLCLVAALLLSASGPRPSLG) are cleaved as a signal peptide. Positions 24–104 (EAIHCPPCSE…MHGQGLCMEL (81 aa)) constitute an IGFBP N-terminal domain. 6 disulfides stabilise this stretch: Cys-28–Cys-54, Cys-31–Cys-56, Cys-39–Cys-57, Cys-45–Cys-60, Cys-68–Cys-81, and Cys-75–Cys-101. Residues 115 to 136 (QPSDKDEGDHPNNSFSPCSPQD) are disordered. An N-linked (GlcNAc...) asparagine glycan is attached at Asn-126. Intrachain disulfides connect Cys-132/Cys-139, Cys-175/Cys-205, Cys-216/Cys-227, and Cys-229/Cys-250. In terms of domain architecture, Thyroglobulin type-1 spans 172-250 (QGSCQSELHR…GLEPKGELDC (79 aa)). Position 256 is a phosphoserine (Ser-256).

As to quaternary structure, binds IGF2 more than IGF1.

It is found in the secreted. Its function is as follows. IGF-binding proteins prolong the half-life of the IGFs and have been shown to either inhibit or stimulate the growth promoting effects of the IGFs on cell culture. They alter the interaction of IGFs with their cell surface receptors. The chain is Insulin-like growth factor-binding protein 4 (IGFBP4) from Sus scrofa (Pig).